The following is a 615-amino-acid chain: Glutamine--fructose-6-phosphate aminotransferase [isomerizing] (615 aa).

C2 (nucleophile; for GATase activity) is an active-site residue. The Glutamine amidotransferase type-2 domain occupies 2 to 220 (CGIVGYVGPQ…QDQVVELRRD (219 aa)). SIS domains lie at 287–427 (IPPG…VRGT) and 460–605 (LARS…VDQP). K610 (for Fru-6P isomerization activity) is an active-site residue.

As to quaternary structure, homodimer.

The protein resides in the cytoplasm. The enzyme catalyses D-fructose 6-phosphate + L-glutamine = D-glucosamine 6-phosphate + L-glutamate. In terms of biological role, catalyzes the first step in hexosamine metabolism, converting fructose-6P into glucosamine-6P using glutamine as a nitrogen source. This is Glutamine--fructose-6-phosphate aminotransferase [isomerizing] from Streptomyces coelicolor (strain ATCC BAA-471 / A3(2) / M145).